A 735-amino-acid chain; its full sequence is Phosphoribosylformylglycinamidine synthase subunit PurL (735 aa).

H49 is an active-site residue. Positions 52 and 91 each coordinate ATP. E93 is a binding site for Mg(2+). Residues 94-97 and R116 contribute to the substrate site; that span reads SHNH. H95 serves as the catalytic Proton acceptor. D117 contacts Mg(2+). Q240 contacts substrate. Residue D268 coordinates Mg(2+). Residue 312 to 314 coordinates substrate; the sequence is ESQ. ATP is bound by residues D493 and G530. N531 contributes to the Mg(2+) binding site. S533 provides a ligand contact to substrate.

The protein belongs to the FGAMS family. As to quaternary structure, monomer. Part of the FGAM synthase complex composed of 1 PurL, 1 PurQ and 2 PurS subunits.

It localises to the cytoplasm. The catalysed reaction is N(2)-formyl-N(1)-(5-phospho-beta-D-ribosyl)glycinamide + L-glutamine + ATP + H2O = 2-formamido-N(1)-(5-O-phospho-beta-D-ribosyl)acetamidine + L-glutamate + ADP + phosphate + H(+). It functions in the pathway purine metabolism; IMP biosynthesis via de novo pathway; 5-amino-1-(5-phospho-D-ribosyl)imidazole from N(2)-formyl-N(1)-(5-phospho-D-ribosyl)glycinamide: step 1/2. Part of the phosphoribosylformylglycinamidine synthase complex involved in the purines biosynthetic pathway. Catalyzes the ATP-dependent conversion of formylglycinamide ribonucleotide (FGAR) and glutamine to yield formylglycinamidine ribonucleotide (FGAM) and glutamate. The FGAM synthase complex is composed of three subunits. PurQ produces an ammonia molecule by converting glutamine to glutamate. PurL transfers the ammonia molecule to FGAR to form FGAM in an ATP-dependent manner. PurS interacts with PurQ and PurL and is thought to assist in the transfer of the ammonia molecule from PurQ to PurL. The protein is Phosphoribosylformylglycinamidine synthase subunit PurL of Azorhizobium caulinodans (strain ATCC 43989 / DSM 5975 / JCM 20966 / LMG 6465 / NBRC 14845 / NCIMB 13405 / ORS 571).